The sequence spans 179 residues: Guanosine-3',5'-bis(diphosphate) 3'-pyrophosphohydrolase MESH1 (179 aa).

An N-acetylglycine modification is found at G2. K25 is subject to N6-acetyllysine. The 96-residue stretch at 32 to 127 folds into the HD domain; it reads YINHPIGVAR…VKLADKLYNL (96 aa). Residues H35, H61, and D62 each coordinate Mn(2+). Catalysis depends on nucleophile residues E65 and D66. The residue at position 97 (K97) is an N6-acetyllysine. D122 provides a ligand contact to Mn(2+). An N6-acetyllysine modification is found at K123.

This sequence belongs to the MESH1 family. Mn(2+) is required as a cofactor.

The catalysed reaction is guanosine 3',5'-bis(diphosphate) + H2O = GDP + diphosphate + H(+). Functionally, ppGpp hydrolyzing enzyme involved in starvation response. The protein is Guanosine-3',5'-bis(diphosphate) 3'-pyrophosphohydrolase MESH1 (Hddc3) of Mus musculus (Mouse).